The following is a 305-amino-acid chain: tRNA dimethylallyltransferase (305 aa).

9-16 (GPTGAGKT) is a binding site for ATP. Residue 11–16 (TGAGKT) participates in substrate binding. 2 interaction with substrate tRNA regions span residues 34–37 (DSRQ) and 158–162 (QRIVR).

It belongs to the IPP transferase family. As to quaternary structure, monomer. Mg(2+) serves as cofactor.

The enzyme catalyses adenosine(37) in tRNA + dimethylallyl diphosphate = N(6)-dimethylallyladenosine(37) in tRNA + diphosphate. Catalyzes the transfer of a dimethylallyl group onto the adenine at position 37 in tRNAs that read codons beginning with uridine, leading to the formation of N6-(dimethylallyl)adenosine (i(6)A). The chain is tRNA dimethylallyltransferase from Oleidesulfovibrio alaskensis (strain ATCC BAA-1058 / DSM 17464 / G20) (Desulfovibrio alaskensis).